A 389-amino-acid polypeptide reads, in one-letter code: NAD-dependent protein deacetylase sirtuin-2 (389 aa).

The tract at residues 1–34 (MAEPDPSDPLETQAGKVQEAQDSDSDTEGGATGG) is disordered. N-acetylalanine is present on Ala-2. Residues Ser-23 and Ser-25 each carry the phosphoserine modification. Thr-27 is modified (phosphothreonine). Positions 41-51 (LRNLFTQTLGL) match the Nuclear export signal motif. Ser-53 carries the post-translational modification Phosphoserine. The 282-residue stretch at 57-338 (RLLDELTLEG…LALADLLGWK (282 aa)) folds into the Deacetylase sirtuin-type domain. Residues 85–89 (AGIST) and 95–97 (DFR) each bind NAD(+). Residue Ser-100 is modified to Phosphoserine. 167–170 (QNID) serves as a coordination point for NAD(+). His-187 acts as the Proton acceptor in catalysis. Zn(2+) contacts are provided by Cys-195, Cys-200, Cys-221, and Cys-224. NAD(+) is bound by residues 262 to 263 (TS), 286 to 288 (NKE), and Cys-324. The interval 350-389 (ANIDAQSGSQAPNPSTTISPGKSPPPAKEAARTKEKEEQQ) is disordered. Polar residues predominate over residues 353–369 (DAQSGSQAPNPSTTISP). Residues Ser-368 and Ser-372 each carry the phosphoserine modification. Residues 378–389 (EAARTKEKEEQQ) are compositionally biased toward basic and acidic residues.

The protein belongs to the sirtuin family. Class I subfamily. In terms of assembly, interacts with CDC20, FOXO3 and FZR1. Associates with microtubule in primary cortical mature neurons. Homotrimer. Interacts (via both phosphorylated, unphosphorylated, active or inactive forms) with HDAC6; the interaction is necessary for the complex to interact with alpha-tubulin, suggesting that these proteins belong to a large complex that deacetylates the cytoskeleton. Interacts with FOXO1; the interaction is disrupted upon serum-starvation or oxidative stress, leading to increased level of acetylated FOXO1 and induction of autophagy. Interacts with RELA; the interaction occurs in the cytoplasm and is increased in a TNF-alpha-dependent manner. Interacts with HOXA10; the interaction is direct. Interacts with YWHAB and YWHAG; the interactions occur in a AKT-dependent manner and increase SIRT2-dependent TP53 deacetylation. Interacts with MAPK1/ERK2 and MAPK3/ERK1; the interactions increase SIRT2 stability and deacetylation activity. Interacts (phosphorylated form) with KMT5A isoform 2; the interaction is direct, stimulates KMT5A-mediated methyltransferase activity on histone at 'Lys-20' (H4K20me1) and is increased in a H(2)O(2)-induced oxidative stress-dependent manner. Interacts with G6PD; the interaction is enhanced by H(2)O(2) treatment. Interacts with a G1/S-specific cyclin E-CDK2 complex. Interacts with AURKA, CDK5R1 (p35 form) and CDK5 and HIF1A. Interacts with the tRNA ligase SARS1; recruited to the VEGFA promoter via interaction with SARS1. Isoform 2 and isoform 4 associate with microtubules in primary cortical mature neurons. Interacts with BEX4; negatively regulates alpha-tubulin deacetylation by SIRT2. Requires Zn(2+) as cofactor. Phosphorylated at phosphoserine and phosphothreonine. Phosphorylated at Ser-368 by a mitotic kinase CDK1/cyclin B at the G2/M transition; phosphorylation regulates the delay in cell-cycle progression. Phosphorylated at Ser-368 by a mitotic kinase G1/S-specific cyclin E/Cdk2 complex; phosphorylation inactivates SIRT2-mediated alpha-tubulin deacetylation and thereby negatively regulates cell adhesion, cell migration and neurite outgrowth during neuronal differentiation. Phosphorylated by cyclin A/Cdk2 and p35-Cdk5 complexes and to a lesser extent by the cyclin D3/Cdk4 and cyclin B/Cdk1, in vitro. Dephosphorylated at Ser-368 by CDC14A and CDC14B around early anaphase. In terms of processing, acetylated by EP300; acetylation leads both to the decreased of SIRT2-mediated alpha-tubulin deacetylase activity and SIRT2-mediated down-regulation of TP53 transcriptional activity. Post-translationally, ubiquitinated. Isoform 1 is weakly expressed in the cortex at postnatal(P) days P1, P3 and P7, and increases progressively between P17 and older adult cortex. Isoform 1 is also expressed in heart, liver and skeletal muscle, weakly expressed in the striatum and spinal cord. Isoform 2 is not expressed in the cortex at P1, P3 and P7, and increases strongly and progressively between P17 and older adult cortex. Isoform 2 is also expressed in the heart, liver, striatum and spinal cord. Isoform 4 is weakly expressed in older adult cortex and spinal cords. Expressed in the cortex. Expressed in postnatal sciatic nerves during myelination and during remyelination after nerve injury. Expressed in neurons, oligodendrocytes, Schwann cells, Purkinje cells and in astrocytes of white matter. Strongly expressed in preadipocytes compared with differentiated adipocytes. Expressed in cerebellar granule cells. Expressed in the inner ear: in the cochlea, expressed in types I and V fibrocytes in the spiral ligament (SL) and slightly in stria vascularis (SV); in the organ of Corti, expressed in some supporting cells; in the crista ampullaris, expressed in spiral ganglion cells; also expressed in the endolymphatic sac (ES) epithelial cells (at protein level). Expressed in the brain, spinal cord, optic nerve and hippocampus. Strongly expressed in 6-8 week-old ovulated meiosis II oocytes and weakly expressed in 45-58 week-old ovulated meiosis II oocytes. Expressed in the cochlea, vestibule and acoustic nerve of the inner ear.

It is found in the nucleus. The protein resides in the cytoplasm. It localises to the perinuclear region. The protein localises to the perikaryon. Its subcellular location is the cytoskeleton. It is found in the cell projection. The protein resides in the growth cone. It localises to the myelin membrane. The protein localises to the microtubule organizing center. Its subcellular location is the centrosome. It is found in the spindle. The protein resides in the chromosome. It localises to the midbody. The protein localises to the centriole. It catalyses the reaction N(6)-acetyl-L-lysyl-[protein] + NAD(+) + H2O = 2''-O-acetyl-ADP-D-ribose + nicotinamide + L-lysyl-[protein]. The catalysed reaction is N(6)-tetradecanoyl-L-lysyl-[protein] + NAD(+) + H2O = 2''-O-tetradecanoyl-ADP-D-ribose + nicotinamide + L-lysyl-[protein]. The enzyme catalyses N(6)-hexadecanoyl-L-lysyl-[protein] + NAD(+) + H2O = 2''-O-hexadecanoyl-ADP-D-ribose + nicotinamide + L-lysyl-[protein]. Inhibited by Sirtinol, A3 and M15 small molecules. Inhibited by nicotinamide. Inhibited by a macrocyclic peptide inhibitor S2iL5. Inhibited by EP300-induced acetylation. Functionally, NAD-dependent protein deacetylase, which deacetylates internal lysines on histone and alpha-tubulin as well as many other proteins such as key transcription factors. Participates in the modulation of multiple and diverse biological processes such as cell cycle control, genomic integrity, microtubule dynamics, cell differentiation, metabolic networks, and autophagy. Plays a major role in the control of cell cycle progression and genomic stability. Functions in the antephase checkpoint preventing precocious mitotic entry in response to microtubule stress agents, and hence allowing proper inheritance of chromosomes. Positively regulates the anaphase promoting complex/cyclosome (APC/C) ubiquitin ligase complex activity by deacetylating CDC20 and FZR1, then allowing progression through mitosis. Associates both with chromatin at transcriptional start sites (TSSs) and enhancers of active genes. Plays a role in cell cycle and chromatin compaction through epigenetic modulation of the regulation of histone H4 'Lys-20' methylation (H4K20me1) during early mitosis. Specifically deacetylates histone H4 at 'Lys-16' (H4K16ac) between the G2/M transition and metaphase enabling H4K20me1 deposition by KMT5A leading to ulterior levels of H4K20me2 and H4K20me3 deposition throughout cell cycle, and mitotic S-phase progression. Deacetylates KMT5A modulating KMT5A chromatin localization during the mitotic stress response. Also deacetylates histone H3 at 'Lys-57' (H3K56ac) during the mitotic G2/M transition. During oocyte meiosis progression, may deacetylate histone H4 at 'Lys-16' (H4K16ac) and alpha-tubulin, regulating spindle assembly and chromosome alignment by influencing microtubule dynamics and kinetochore function. Deacetylates histone H4 at 'Lys-16' (H4K16ac) at the VEGFA promoter and thereby contributes to regulate expression of VEGFA, a key regulator of angiogenesis. Deacetylates alpha-tubulin at 'Lys-40' and hence controls neuronal motility, oligodendroglial cell arbor projection processes and proliferation of non-neuronal cells. Phosphorylation at Ser-368 by a G1/S-specific cyclin E-CDK2 complex inactivates SIRT2-mediated alpha-tubulin deacetylation, negatively regulating cell adhesion, cell migration and neurite outgrowth during neuronal differentiation. Deacetylates PARD3 and participates in the regulation of Schwann cell peripheral myelination formation during early postnatal development and during postinjury remyelination. Involved in several cellular metabolic pathways. Plays a role in the regulation of blood glucose homeostasis by deacetylating and stabilizing phosphoenolpyruvate carboxykinase PCK1 activity in response to low nutrient availability. Acts as a key regulator in the pentose phosphate pathway (PPP) by deacetylating and activating the glucose-6-phosphate G6PD enzyme, and therefore, stimulates the production of cytosolic NADPH to counteract oxidative damage. Maintains energy homeostasis in response to nutrient deprivation as well as energy expenditure by inhibiting adipogenesis and promoting lipolysis. Attenuates adipocyte differentiation by deacetylating and promoting FOXO1 interaction to PPARG and subsequent repression of PPARG-dependent transcriptional activity. Plays a role in the regulation of lysosome-mediated degradation of protein aggregates by autophagy in neuronal cells. Deacetylates FOXO1 in response to oxidative stress or serum deprivation, thereby negatively regulating FOXO1-mediated autophagy. Deacetylates a broad range of transcription factors and co-regulators regulating target gene expression. Deacetylates transcriptional factor FOXO3 stimulating the ubiquitin ligase SCF(SKP2)-mediated FOXO3 ubiquitination and degradation. Deacetylates HIF1A and therefore promotes HIF1A degradation and inhibition of HIF1A transcriptional activity in tumor cells in response to hypoxia. Deacetylates RELA in the cytoplasm inhibiting NF-kappaB-dependent transcription activation upon TNF-alpha stimulation. Inhibits transcriptional activation by deacetylating p53/TP53 and EP300. Also deacetylates EIF5A. Functions as a negative regulator on oxidative stress-tolerance in response to anoxia-reoxygenation conditions. Plays a role as tumor suppressor. In addition to protein deacetylase activity, also has activity toward long-chain fatty acyl groups and mediates protein-lysine demyristoylation and depalmitoylation of target proteins, such as ARF6 and KRAS, thereby regulating their association with membranes. In terms of biological role, deacetylates alpha-tubulin. The protein is NAD-dependent protein deacetylase sirtuin-2 (Sirt2) of Mus musculus (Mouse).